Here is a 578-residue protein sequence, read N- to C-terminus: Isocitrate dehydrogenase kinase/phosphatase (578 aa).

Residues 315–321 (APGIRGM) and K336 contribute to the ATP site. Residue D371 is part of the active site.

The protein belongs to the AceK family.

It is found in the cytoplasm. The catalysed reaction is L-seryl-[isocitrate dehydrogenase] + ATP = O-phospho-L-seryl-[isocitrate dehydrogenase] + ADP + H(+). In terms of biological role, bifunctional enzyme which can phosphorylate or dephosphorylate isocitrate dehydrogenase (IDH) on a specific serine residue. This is a regulatory mechanism which enables bacteria to bypass the Krebs cycle via the glyoxylate shunt in response to the source of carbon. When bacteria are grown on glucose, IDH is fully active and unphosphorylated, but when grown on acetate or ethanol, the activity of IDH declines drastically concomitant with its phosphorylation. This is Isocitrate dehydrogenase kinase/phosphatase from Escherichia coli (strain K12 / MC4100 / BW2952).